The chain runs to 301 residues: Transmembrane protein 178A (301 aa).

Positions 1-25 (MEKRALVTAISLSMSLLALMLLVTA) are cleaved as a signal peptide. The Extracellular segment spans residues 26–183 (IFTDHWYETD…LLHLRRITAG (158 aa)). Residue Asn-162 is glycosylated (N-linked (GlcNAc...) asparagine). A helical transmembrane segment spans residues 184–204 (FLGMAAAVMLCGSIVAAVGFF). The Cytoplasmic segment spans residues 205-215 (WEESLTQHVSG). The chain crosses the membrane as a helical span at residues 216 to 236 (LLFLMAGIFCTISLCTYAASV). The Extracellular portion of the chain corresponds to 237-258 (SYDLSRNPPFIYGLPSDVDHGY). The chain crosses the membrane as a helical span at residues 259 to 279 (GWSIFCAWVSLGLTVASGCIC). At 280–301 (TTYPFLSRTKALRSKTARESSV) the chain is on the cytoplasmic side.

Belongs to the TMEM178 family.

Its subcellular location is the endoplasmic reticulum membrane. Its function is as follows. May act as a negative regulator of osteoclast differentiation. The chain is Transmembrane protein 178A (tmem178a) from Danio rerio (Zebrafish).